A 398-amino-acid polypeptide reads, in one-letter code: Phosphoglycerate kinase (398 aa).

Substrate is bound by residues 23–25 (DLN), Arg-38, 61–64 (HFGR), Arg-119, and Arg-152. Residues Lys-202, Glu-324, and 354 to 357 (GGDT) contribute to the ATP site.

Belongs to the phosphoglycerate kinase family. Monomer.

The protein localises to the cytoplasm. The catalysed reaction is (2R)-3-phosphoglycerate + ATP = (2R)-3-phospho-glyceroyl phosphate + ADP. Its pathway is carbohydrate degradation; glycolysis; pyruvate from D-glyceraldehyde 3-phosphate: step 2/5. The polypeptide is Phosphoglycerate kinase (Bradyrhizobium diazoefficiens (strain JCM 10833 / BCRC 13528 / IAM 13628 / NBRC 14792 / USDA 110)).